The chain runs to 231 residues: Protein N-terminal glutamine amidohydrolase (231 aa).

Residues 1–21 form a disordered region; sequence MADDRVAGGATPPPPPPPPPL. Positions 11-21 are enriched in pro residues; it reads TPPPPPPPPPL. Residues cysteine 33, histidine 89, and aspartate 108 contribute to the active site.

This sequence belongs to the NTAQ1 family. As to quaternary structure, monomer.

The enzyme catalyses N-terminal L-glutaminyl-[protein] + H2O = N-terminal L-glutamyl-[protein] + NH4(+). Its function is as follows. Mediates the side-chain deamidation of N-terminal glutamine residues to glutamate, an important step in N-end rule pathway of protein degradation. Conversion of the resulting N-terminal glutamine to glutamate renders the protein susceptible to arginylation, polyubiquitination and degradation as specified by the N-end rule. Does not act on substrates with internal or C-terminal glutamine and does not act on non-glutamine residues in any position. The chain is Protein N-terminal glutamine amidohydrolase from Oryza sativa subsp. indica (Rice).